Consider the following 265-residue polypeptide: Probable ribose-5-phosphate isomerase 2 (265 aa).

Residue Ala-2 is modified to N-acetylalanine. Ser-96 carries the post-translational modification Phosphoserine.

This sequence belongs to the ribose 5-phosphate isomerase family.

Its subcellular location is the cytoplasm. It catalyses the reaction aldehydo-D-ribose 5-phosphate = D-ribulose 5-phosphate. Its pathway is carbohydrate degradation; pentose phosphate pathway; D-ribose 5-phosphate from D-ribulose 5-phosphate (non-oxidative stage): step 1/1. In terms of biological role, catalyzes the reversible conversion of ribose-5-phosphate to ribulose 5-phosphate. This is Probable ribose-5-phosphate isomerase 2 (RPI2) from Arabidopsis thaliana (Mouse-ear cress).